A 356-amino-acid chain; its full sequence is Chorismate synthase (356 aa).

Position 44 (R44) interacts with NADP(+). FMN is bound by residues 121-123 (HFS), G278, 293-297 (KPTPS), and R320.

It belongs to the chorismate synthase family. It depends on FMNH2 as a cofactor.

It catalyses the reaction 5-O-(1-carboxyvinyl)-3-phosphoshikimate = chorismate + phosphate. The protein operates within metabolic intermediate biosynthesis; chorismate biosynthesis; chorismate from D-erythrose 4-phosphate and phosphoenolpyruvate: step 7/7. Catalyzes the anti-1,4-elimination of the C-3 phosphate and the C-6 proR hydrogen from 5-enolpyruvylshikimate-3-phosphate (EPSP) to yield chorismate, which is the branch point compound that serves as the starting substrate for the three terminal pathways of aromatic amino acid biosynthesis. This reaction introduces a second double bond into the aromatic ring system. The sequence is that of Chorismate synthase from Pyrococcus abyssi (strain GE5 / Orsay).